Here is a 514-residue protein sequence, read N- to C-terminus: Maturase K (514 aa).

The protein belongs to the intron maturase 2 family. MatK subfamily.

It is found in the plastid. Its subcellular location is the chloroplast. In terms of biological role, usually encoded in the trnK tRNA gene intron. Probably assists in splicing its own and other chloroplast group II introns. The sequence is that of Maturase K from Drosophyllum lusitanicum (Portuguese sundew).